The sequence spans 130 residues: MINRKVVYALSALLLFVYSYAFISDFSEFKNFLNIQYLKFKEFLFLLNNAEEKRRGTLNEDVLRQLTENLELVSIRYEYGKYEVKLRKVNAVELVSLLKELENYGKVEKLEAVDNTGRGIFDVKFIVSPL.

A signal peptide spans 1 to 23 (MINRKVVYALSALLLFVYSYAFI).

This is an uncharacterized protein from Aquifex aeolicus (strain VF5).